A 470-amino-acid polypeptide reads, in one-letter code: A-type ATP synthase subunit B (470 aa).

The protein belongs to the ATPase alpha/beta chains family. Has multiple subunits with at least A(3), B(3), C, D, E, F, H, I and proteolipid K(x).

It localises to the cell membrane. Component of the A-type ATP synthase that produces ATP from ADP in the presence of a proton gradient across the membrane. The B chain is a regulatory subunit. This is A-type ATP synthase subunit B from Haloarcula marismortui (strain ATCC 43049 / DSM 3752 / JCM 8966 / VKM B-1809) (Halobacterium marismortui).